The primary structure comprises 121 residues: Large ribosomal subunit protein bL20 (121 aa).

It belongs to the bacterial ribosomal protein bL20 family.

Its function is as follows. Binds directly to 23S ribosomal RNA and is necessary for the in vitro assembly process of the 50S ribosomal subunit. It is not involved in the protein synthesizing functions of that subunit. The polypeptide is Large ribosomal subunit protein bL20 (Wolbachia sp. subsp. Brugia malayi (strain TRS)).